Consider the following 284-residue polypeptide: Tropomyosin alpha-1 chain (284 aa).

A disordered region spans residues 1–38 (MDAIKKKMQMLKLDKENALDRAEQAEADKKGAEDKSKQ). The stretch at 1–284 (MDAIKKKMQM…DHALNDMTSI (284 aa)) forms a coiled coil. Positions 12–38 (KLDKENALDRAEQAEADKKGAEDKSKQ) are enriched in basic and acidic residues.

It belongs to the tropomyosin family. As to quaternary structure, homodimer. Heterodimer of an alpha (TPM1, TPM3 or TPM4) and a beta (TPM2) chain.

It localises to the cytoplasm. The protein resides in the cytoskeleton. Its function is as follows. Binds to actin filaments in muscle and non-muscle cells. Plays a central role, in association with the troponin complex, in the calcium dependent regulation of vertebrate striated muscle contraction. Smooth muscle contraction is regulated by interaction with caldesmon. In non-muscle cells is implicated in stabilizing cytoskeleton actin filaments. The sequence is that of Tropomyosin alpha-1 chain (tpm1) from Xenopus laevis (African clawed frog).